We begin with the raw amino-acid sequence, 346 residues long: Holliday junction branch migration complex subunit RuvB (346 aa).

The interval 1–182 (MKIELLNTPA…FGISSRFDYY (182 aa)) is large ATPase domain (RuvB-L). ATP-binding positions include isoleucine 21, arginine 22, glycine 63, lysine 66, threonine 67, threonine 68, 129-131 (EDF), arginine 172, tyrosine 182, and arginine 219. Residue threonine 67 coordinates Mg(2+). The tract at residues 183–253 (PPELLERIIL…IAMTTLASLE (71 aa)) is small ATPAse domain (RuvB-S). A head domain (RuvB-H) region spans residues 256-346 (EEGLDDMDKK…GPLFDAAPAR (91 aa)). DNA is bound by residues arginine 311 and arginine 316.

This sequence belongs to the RuvB family. In terms of assembly, homohexamer. Forms an RuvA(8)-RuvB(12)-Holliday junction (HJ) complex. HJ DNA is sandwiched between 2 RuvA tetramers; dsDNA enters through RuvA and exits via RuvB. An RuvB hexamer assembles on each DNA strand where it exits the tetramer. Each RuvB hexamer is contacted by two RuvA subunits (via domain III) on 2 adjacent RuvB subunits; this complex drives branch migration. In the full resolvosome a probable DNA-RuvA(4)-RuvB(12)-RuvC(2) complex forms which resolves the HJ.

The protein localises to the cytoplasm. It carries out the reaction ATP + H2O = ADP + phosphate + H(+). Functionally, the RuvA-RuvB-RuvC complex processes Holliday junction (HJ) DNA during genetic recombination and DNA repair, while the RuvA-RuvB complex plays an important role in the rescue of blocked DNA replication forks via replication fork reversal (RFR). RuvA specifically binds to HJ cruciform DNA, conferring on it an open structure. The RuvB hexamer acts as an ATP-dependent pump, pulling dsDNA into and through the RuvAB complex. RuvB forms 2 homohexamers on either side of HJ DNA bound by 1 or 2 RuvA tetramers; 4 subunits per hexamer contact DNA at a time. Coordinated motions by a converter formed by DNA-disengaged RuvB subunits stimulates ATP hydrolysis and nucleotide exchange. Immobilization of the converter enables RuvB to convert the ATP-contained energy into a lever motion, pulling 2 nucleotides of DNA out of the RuvA tetramer per ATP hydrolyzed, thus driving DNA branch migration. The RuvB motors rotate together with the DNA substrate, which together with the progressing nucleotide cycle form the mechanistic basis for DNA recombination by continuous HJ branch migration. Branch migration allows RuvC to scan DNA until it finds its consensus sequence, where it cleaves and resolves cruciform DNA. The protein is Holliday junction branch migration complex subunit RuvB of Chlorobium phaeobacteroides (strain DSM 266 / SMG 266 / 2430).